We begin with the raw amino-acid sequence, 356 residues long: Histidinol-phosphate aminotransferase (356 aa).

N6-(pyridoxal phosphate)lysine is present on K214.

It belongs to the class-II pyridoxal-phosphate-dependent aminotransferase family. Histidinol-phosphate aminotransferase subfamily. As to quaternary structure, homodimer. It depends on pyridoxal 5'-phosphate as a cofactor.

The enzyme catalyses L-histidinol phosphate + 2-oxoglutarate = 3-(imidazol-4-yl)-2-oxopropyl phosphate + L-glutamate. Its pathway is amino-acid biosynthesis; L-histidine biosynthesis; L-histidine from 5-phospho-alpha-D-ribose 1-diphosphate: step 7/9. The protein is Histidinol-phosphate aminotransferase of Shigella boydii serotype 4 (strain Sb227).